The following is a 316-amino-acid chain: Pantothenate kinase (316 aa).

95–102 (GSVAVGKS) lines the ATP pocket.

It belongs to the prokaryotic pantothenate kinase family.

It localises to the cytoplasm. The enzyme catalyses (R)-pantothenate + ATP = (R)-4'-phosphopantothenate + ADP + H(+). It participates in cofactor biosynthesis; coenzyme A biosynthesis; CoA from (R)-pantothenate: step 1/5. This chain is Pantothenate kinase, found in Shewanella sp. (strain MR-7).